We begin with the raw amino-acid sequence, 1312 residues long: Multidrug resistance protein 3 (1312 aa).

The helical transmembrane segment at 51–71 (GFIDYILLIGGIIGAMAAGVL) threads the bilayer. The region spanning 59–369 (IGGIIGAMAA…VAMPINALST (311 aa)) is the ABC transmembrane type-1 1 domain. N-linked (GlcNAc...) asparagine glycosylation is present at Asn-98. The next 5 membrane-spanning stretches (helical) occupy residues 127–147 (IYFA…FFVL), 197–217 (KFGV…IGFS), 224–244 (LVIM…GFFA), 302–322 (VVGV…ALGS), and 344–364 (MVVF…AMPI). In terms of domain architecture, ABC transporter 1 spans 404 to 643 (IKLEDVQFRY…KATYYGLVKR (240 aa)). 439–446 (GASGCGKS) is a binding site for ATP. An ABC transmembrane type-1 2 domain is found at 724 to 1033 (LLSFLGLIGG…LGQMIPDVGK (310 aa)). Helical transmembrane passes span 725 to 745 (LSFL…FYMI) and 776 to 796 (IWIL…LGLF). N-linked (GlcNAc...) asparagine glycosylation is present at Asn-819. 3 helical membrane-spanning segments follow: residues 852-872 (VGNV…AFYY), 874-894 (WKVA…VFLN), and 958-978 (AFVS…SFYI). One can recognise an ABC transporter 2 domain in the interval 1068 to 1307 (IEFKDICFRY…KGFYYTLAMQ (240 aa)). 1103–1110 (GASGCGKS) contacts ATP.

The protein belongs to the ABC transporter superfamily. ABCB family. Multidrug resistance exporter (TC 3.A.1.201) subfamily.

It is found in the membrane. It catalyses the reaction ATP + H2O + xenobioticSide 1 = ADP + phosphate + xenobioticSide 2.. Energy-dependent efflux pump responsible for decreased drug accumulation in multidrug resistance parasites. This is Multidrug resistance protein 3 from Entamoeba histolytica (strain ATCC 30459 / HM-1:IMSS / ABRM).